Reading from the N-terminus, the 302-residue chain is NAD kinase 2 (302 aa).

Residue Asp78 is the Proton acceptor of the active site. NAD(+) is bound by residues 78 to 79 (DG), 152 to 153 (NE), Asp182, 193 to 198 (TAYALS), and Ala217.

Belongs to the NAD kinase family. It depends on a divalent metal cation as a cofactor.

It is found in the cytoplasm. The enzyme catalyses NAD(+) + ATP = ADP + NADP(+) + H(+). Its function is as follows. Involved in the regulation of the intracellular balance of NAD and NADP, and is a key enzyme in the biosynthesis of NADP. Catalyzes specifically the phosphorylation on 2'-hydroxyl of the adenosine moiety of NAD to yield NADP. This chain is NAD kinase 2, found in Parasynechococcus marenigrum (strain WH8102).